The following is a 566-amino-acid chain: Tetratricopeptide repeat protein 34 (566 aa).

The segment at 1-29 is disordered; it reads MLQRSPRAGPSRAQGRREAAETGGPTTQE. TPR repeat units follow at residues 50–83, 178–211, 212–245, 306–339, 341–373, 424–457, 464–497, and 512–545; these read EASRLLAADALYRLGRLEETHKALLVALSRRPQA, SESLLARARCYGFLGQKKTAMFDFNTVLRAEPGN, VQALCGRALVHLALDQLQEAVDDIVSALKLGPGT, PHWHLLLADILMAQGSYEEAGTHLEKALHRAPTS, AARARLGLLQLKKGDVPGAARDLQSLAEVDAPD, ACHLRLRATCLAELQEFGRALRDLDHVLQEALGD, AEDFCRQGRLLLSLGDEAAAAGAFAQALKLAPSL, and ARMFLLRGQCCLEEQRHAEAWTAVESGLLVDPDH.

This chain is Tetratricopeptide repeat protein 34 (TTC34), found in Homo sapiens (Human).